The sequence spans 106 residues: Ig kappa chain C region, A allele (106 aa).

The Ig-like domain maps to 5-102; the sequence is PTVSIFPPSM…SSSPVVKSFN (98 aa). Residues Cys26 and Cys86 are joined by a disulfide bond.

The chain is Ig kappa chain C region, A allele from Rattus norvegicus (Rat).